Here is an 869-residue protein sequence, read N- to C-terminus: Bifunctional uridylyltransferase/uridylyl-removing enzyme (869 aa).

Residues 1 to 332 (MTDTPAERPD…QFDGEATPEP (332 aa)) form a uridylyltransferase region. The segment at 333 to 691 (LGGGFSLRRG…RRAVPDNDAL (359 aa)) is uridylyl-removing. The HD domain occupies 450–572 (VDQHTLMVLR…VGTRERLDYL (123 aa)). 2 ACT domains span residues 692 to 774 (EVFV…RAVP) and 798 to 869 (RISL…LDPV).

Belongs to the GlnD family. Requires Mg(2+) as cofactor.

It carries out the reaction [protein-PII]-L-tyrosine + UTP = [protein-PII]-uridylyl-L-tyrosine + diphosphate. The enzyme catalyses [protein-PII]-uridylyl-L-tyrosine + H2O = [protein-PII]-L-tyrosine + UMP + H(+). With respect to regulation, uridylyltransferase (UTase) activity is inhibited by glutamine, while glutamine activates uridylyl-removing (UR) activity. Functionally, modifies, by uridylylation and deuridylylation, the PII regulatory proteins (GlnB and homologs), in response to the nitrogen status of the cell that GlnD senses through the glutamine level. Under low glutamine levels, catalyzes the conversion of the PII proteins and UTP to PII-UMP and PPi, while under higher glutamine levels, GlnD hydrolyzes PII-UMP to PII and UMP (deuridylylation). Thus, controls uridylylation state and activity of the PII proteins, and plays an important role in the regulation of nitrogen assimilation and metabolism. The chain is Bifunctional uridylyltransferase/uridylyl-removing enzyme from Xanthomonas axonopodis pv. citri (strain 306).